The chain runs to 283 residues: Elongation factor Ts (283 aa).

An involved in Mg(2+) ion dislocation from EF-Tu region spans residues 80 to 83 (TDFV).

Belongs to the EF-Ts family.

It is found in the cytoplasm. Functionally, associates with the EF-Tu.GDP complex and induces the exchange of GDP to GTP. It remains bound to the aminoacyl-tRNA.EF-Tu.GTP complex up to the GTP hydrolysis stage on the ribosome. This is Elongation factor Ts from Serratia proteamaculans (strain 568).